Consider the following 461-residue polypeptide: MSEFTPREIVSELDRYIIGQNMAKRAVAIALRNRWRRQRLSAEMREEVYPKNILMIGPTGVGKTEIARRLAKLARAPFIKVEATKFTEVGYVGRDVESIVRDLVEMGITMVTEEAKVKVQFQAEDQAEERLLDILLPLPSTGQGEGSAHFGLFGQMEGSSVKPEPTAQQKESRQKMRKMLREGKLDDREIDIDLKEQRRVPMMEVITPQGMEGINLQDMLGGLMGGRTKTRRVKVGEAMKLLTEEEAGKLVDQDTVQQVAIERVEQSGIVFLDELDKVCARGSETRGGDVSREGVQRDLLPLVEGTTVSTKYGMVKSDHILFIASGAFQLAKPSDLLPELQGRLPIRVELESLGKGEFVRILTEPENALTRQYAALMGVENIELVFTDEGIEALAEIATRVNETAENIGARRLHTVMEKLLDELSFSAPDRGGERVVIDAAYVNRQLSDLAADEDLSRFIL.

Residues I18 and 60 to 65 contribute to the ATP site; that span reads GVGKTE. A disordered region spans residues 157–178; the sequence is EGSSVKPEPTAQQKESRQKMRK. ATP contacts are provided by D273, E339, and R411.

It belongs to the ClpX chaperone family. HslU subfamily. A double ring-shaped homohexamer of HslV is capped on each side by a ring-shaped HslU homohexamer. The assembly of the HslU/HslV complex is dependent on binding of ATP.

It is found in the cytoplasm. Functionally, ATPase subunit of a proteasome-like degradation complex; this subunit has chaperone activity. The binding of ATP and its subsequent hydrolysis by HslU are essential for unfolding of protein substrates subsequently hydrolyzed by HslV. HslU recognizes the N-terminal part of its protein substrates and unfolds these before they are guided to HslV for hydrolysis. The chain is ATP-dependent protease ATPase subunit HslU from Magnetococcus marinus (strain ATCC BAA-1437 / JCM 17883 / MC-1).